The following is a 719-amino-acid chain: Protein lin-15A (719 aa).

Disordered stretches follow at residues Phe-179–Gln-199, Tyr-419–Trp-464, Leu-559–Thr-626, and Ala-684–Phe-719. The segment covering Ser-570–Ser-579 has biased composition (low complexity). Residues Leu-604 to Pro-617 are compositionally biased toward polar residues. Positions Glu-693–Phe-719 are enriched in basic and acidic residues.

Its subcellular location is the nucleus. Its function is as follows. Synthetic multivulva (synMuv) class A protein. SynMuv proteins are required to repress the induction of vulval development. Acts redundantly with SynMuv class B protein lin-15B, and lin-35 to negatively regulate vulval development, most likely through antagonization of the Ras-signaling pathway. May also negatively regulate vulval development in association with other SynMuv class B proteins such as dpl-1 and efl-1. Regulates let-23 basal activity. Required for the correct expression and/or stability of lin-56. This is Protein lin-15A from Caenorhabditis elegans.